Reading from the N-terminus, the 692-residue chain is Catalase-B (692 aa).

Residues His-69 and Asn-142 contribute to the active site. Tyr-356 contributes to the heme binding site.

Belongs to the catalase family. Heme is required as a cofactor.

The protein resides in the cytoplasm. It catalyses the reaction 2 H2O2 = O2 + 2 H2O. Functionally, occurs in almost all aerobically respiring organisms and serves to protect cells from the toxic effects of hydrogen peroxide. Its accumulation in prespore cells affords the spores protection from oxidation during prolonged dormancy. Required for normal developmental timing, possibly through a regulatory role in differentiation and morphogenesis. This Dictyostelium discoideum (Social amoeba) protein is Catalase-B (catB).